The chain runs to 470 residues: Histone deacetylase HOS1 (470 aa).

The interval 47-392 (LTFPYARKDD…YTYLTWCVTK (346 aa)) is histone deacetylase. Position 110 is a phosphoserine (Ser110). His211 is an active-site residue.

It belongs to the histone deacetylase family. HD type 1 subfamily.

Its subcellular location is the nucleus. It catalyses the reaction N(6)-acetyl-L-lysyl-[histone] + H2O = L-lysyl-[histone] + acetate. Functionally, responsible for the deacetylation of lysine residues on the N-terminal part of the core histones (H2A, H2B, H3 and H4). Histone deacetylation plays an important role in transcriptional regulation, cell cycle progression and developmental events. Histone deacetylases act via the formation of large multiprotein complexes. The chain is Histone deacetylase HOS1 (HOS1) from Saccharomyces cerevisiae (strain ATCC 204508 / S288c) (Baker's yeast).